The sequence spans 599 residues: Elongation factor 4 (599 aa).

Residues 5–187 (NRIRNFSIVA…AIVTRLPAPK (183 aa)) form the tr-type G domain. Residues 17-22 (DHGKST) and 134-137 (NKVD) each bind GTP.

Belongs to the TRAFAC class translation factor GTPase superfamily. Classic translation factor GTPase family. LepA subfamily.

The protein localises to the cell inner membrane. The enzyme catalyses GTP + H2O = GDP + phosphate + H(+). Functionally, required for accurate and efficient protein synthesis under certain stress conditions. May act as a fidelity factor of the translation reaction, by catalyzing a one-codon backward translocation of tRNAs on improperly translocated ribosomes. Back-translocation proceeds from a post-translocation (POST) complex to a pre-translocation (PRE) complex, thus giving elongation factor G a second chance to translocate the tRNAs correctly. Binds to ribosomes in a GTP-dependent manner. This is Elongation factor 4 from Jannaschia sp. (strain CCS1).